A 613-amino-acid polypeptide reads, in one-letter code: Ribosome-associated molecular chaperone SSB1 (613 aa).

The tract at residues 1–391 (MAEGVFPGAI…ILTGQSTSDE (391 aa)) is nucleotide binding domain (NBD). ATP contacts are provided by residues 16 to 18 (TTY), Lys73, 205 to 207 (GGT), 271 to 278 (ERAKRTLS), and Gly342. An inter-domain linker region spans residues 392–402 (TKDLLLLDVAP). The interval 403 to 613 (LSLGVGMAGD…RAVTKAMSTR (211 aa)) is substrate binding domain (SBD). The tract at residues 516-612 (SEEIEQMVNQ…KRAVTKAMST (97 aa)) is lid domain (SBDalpha). The short motif at 574 to 582 (VEAALADAF) is the Nuclear export signal element.

Belongs to the heat shock protein 70 family. Ssb-type Hsp70 subfamily. In terms of assembly, binds to ribosomes. Binds close to the ribosomal tunnel exit via contacts with both ribosomal proteins and rRNA. Directly interacts with nascent polypeptides. This interaction is dependent on the ribosome-associated complex (RAC). Interacts with SSE1. Interacts with FES1.

Its subcellular location is the cytoplasm. The catalysed reaction is ATP + H2O = ADP + phosphate + H(+). Ribosome-bound, Hsp70-type chaperone that assists in the cotranslational folding of newly synthesized proteins in the cytosol. Stimulates folding by interacting with nascent chains, binding to short, largely hydrophobic sequences exposed by unfolded proteins, thereby stabilizing longer, more slowly translated, and aggregation-prone nascent polypeptides and domains that cannot fold stably until fully synthesized. The Hsp70-protein substrate interaction depends on ATP-binding and on allosteric regulation between the NBD and the SBD. The ATP-bound state is characterized by a fast exchange rate of substrate (low affinity state), while in the ADP-bound state exchange is much slower (high affinity state). During the Hsp70 cycle, the chaperone switches between the ATP-bound state (open conformation) and the ADP-bound state (closed conformation) by major conformational rearrangements involving mainly the lid domain. Ssb cooperates with a specific Hsp40/Hsp70 co-chaperone termed the ribosome-associated complex (RAC), which stimulates the ATPase activity of the ribosome-associated pool of Ssbs and switches it to the high affinity substrate binding state. Hsp110 chaperone SSE1 and FES1 act as nucleotide exchange factors that cause substrate release. The protein is Ribosome-associated molecular chaperone SSB1 (SSB1) of Kluyveromyces marxianus (Yeast).